The following is a 299-amino-acid chain: S-formylglutathione hydrolase (299 aa).

Cu cation-binding residues include Met-1 and His-140. Catalysis depends on charge relay system residues Ser-161, Asp-241, and His-276.

The protein belongs to the esterase D family. As to quaternary structure, monomer.

It localises to the cytoplasm. It catalyses the reaction S-formylglutathione + H2O = formate + glutathione + H(+). In terms of biological role, serine hydrolase involved in the detoxification of formaldehyde. The polypeptide is S-formylglutathione hydrolase (Saccharomyces cerevisiae (strain ATCC 204508 / S288c) (Baker's yeast)).